An 84-amino-acid polypeptide reads, in one-letter code: NAD(P)H-quinone oxidoreductase subunit O (84 aa).

Belongs to the complex I NdhO subunit family. As to quaternary structure, NDH-1 can be composed of about 15 different subunits; different subcomplexes with different compositions have been identified which probably have different functions.

The protein resides in the cellular thylakoid membrane. The enzyme catalyses a plastoquinone + NADH + (n+1) H(+)(in) = a plastoquinol + NAD(+) + n H(+)(out). It catalyses the reaction a plastoquinone + NADPH + (n+1) H(+)(in) = a plastoquinol + NADP(+) + n H(+)(out). NDH-1 shuttles electrons from an unknown electron donor, via FMN and iron-sulfur (Fe-S) centers, to quinones in the respiratory and/or the photosynthetic chain. The immediate electron acceptor for the enzyme in this species is believed to be plastoquinone. Couples the redox reaction to proton translocation, and thus conserves the redox energy in a proton gradient. Cyanobacterial NDH-1 also plays a role in inorganic carbon-concentration. The chain is NAD(P)H-quinone oxidoreductase subunit O from Synechococcus sp. (strain CC9605).